We begin with the raw amino-acid sequence, 531 residues long: Dimethylnonatriene synthase (531 aa).

A helical membrane pass occupies residues threonine 6–alanine 26. Cysteine 464 is a heme binding site.

The protein belongs to the cytochrome P450 family. It depends on heme as a cofactor.

The protein localises to the membrane. It carries out the reaction (6E,10E)-geranyllinalool + reduced [NADPH--hemoprotein reductase] + O2 = (3E,7E)-4,8,12-trimethyltrideca 1,3,7,11-tetraene + but-3-en-2-one + oxidized [NADPH--hemoprotein reductase] + 2 H2O + H(+). The catalysed reaction is (3S,6E)-nerolidol + reduced [NADPH--hemoprotein reductase] + O2 = (3E)-4,8-dimethylnona-1,3,7-triene + but-3-en-2-one + oxidized [NADPH--hemoprotein reductase] + 2 H2O + H(+). It participates in secondary metabolite biosynthesis; terpenoid biosynthesis. In terms of biological role, involved in the biosynthesis of homoterpenes, attractants of herbivores parasitoids and predators (e.g. predatory mites and parasitoid wasps). Component of the volatile terpenes biosynthesis pathways. Converts mainly nerolidol to dimethylnonatriene (DMNT) and, to a lower extent, geranyllinalool to trimethyltridecatetraene (TMTT). The polypeptide is Dimethylnonatriene synthase (Zea mays (Maize)).